A 183-amino-acid chain; its full sequence is Nascent polypeptide-associated complex subunit beta (183 aa).

The NAC-A/B domain maps to 62–127 (GADDKKLQTT…GEEKELTELV (66 aa)). Positions 150–183 (QNMQKQAGTEGKKDEDEDDIPDLVEGENFESNVE) are disordered. The segment covering 164-183 (EDEDDIPDLVEGENFESNVE) has biased composition (acidic residues).

This sequence belongs to the NAC-beta family. Part of the nascent polypeptide-associated complex (NAC), consisting of egd2 and egd1. NAC associates with ribosomes via egd1.

Its subcellular location is the cytoplasm. The protein resides in the nucleus. Functionally, component of the nascent polypeptide-associated complex (NAC), a dynamic component of the ribosomal exit tunnel, protecting the emerging polypeptides from interaction with other cytoplasmic proteins to ensure appropriate nascent protein targeting. The NAC complex also promotes mitochondrial protein import by enhancing productive ribosome interactions with the outer mitochondrial membrane and blocks the inappropriate interaction of ribosomes translating non-secretory nascent polypeptides with translocation sites in the membrane of the endoplasmic reticulum. EGD1 may act as a transcription factor that exert a negative effect on the expression of several genes that are transcribed by RNA polymerase II. The protein is Nascent polypeptide-associated complex subunit beta (egd1) of Neosartorya fischeri (strain ATCC 1020 / DSM 3700 / CBS 544.65 / FGSC A1164 / JCM 1740 / NRRL 181 / WB 181) (Aspergillus fischerianus).